Consider the following 344-residue polypeptide: CRISPR-associated endonuclease Cas1 2 (344 aa).

Glutamate 167, histidine 235, and glutamate 250 together coordinate Mn(2+).

Belongs to the CRISPR-associated endonuclease Cas1 family. As to quaternary structure, homodimer, forms a heterotetramer with a Cas2 homodimer. The cofactor is Mg(2+). Mn(2+) is required as a cofactor.

Its function is as follows. CRISPR (clustered regularly interspaced short palindromic repeat), is an adaptive immune system that provides protection against mobile genetic elements (viruses, transposable elements and conjugative plasmids). CRISPR clusters contain spacers, sequences complementary to antecedent mobile elements, and target invading nucleic acids. CRISPR clusters are transcribed and processed into CRISPR RNA (crRNA). Acts as a dsDNA endonuclease. Involved in the integration of spacer DNA into the CRISPR cassette. This is CRISPR-associated endonuclease Cas1 2 from Rhodospirillum rubrum (strain ATCC 11170 / ATH 1.1.1 / DSM 467 / LMG 4362 / NCIMB 8255 / S1).